An 87-amino-acid chain; its full sequence is Putative regulatory protein GK1166 (87 aa).

Belongs to the RemA family.

This Geobacillus kaustophilus (strain HTA426) protein is Putative regulatory protein GK1166.